Reading from the N-terminus, the 66-residue chain is MAKGKDVRVRVILECINCVRNGVNKESPGVSRYITQKNRHNTPSRLELRKFCPYCFKHTIHGEIKK.

Belongs to the bacterial ribosomal protein bL33 family.

Its subcellular location is the plastid. The protein localises to the chloroplast. The protein is Large ribosomal subunit protein bL33c of Platanus occidentalis (Sycamore).